The primary structure comprises 389 residues: 8-amino-7-oxononanoate synthase (389 aa).

R19 is a binding site for substrate. 106 to 107 contributes to the pyridoxal 5'-phosphate binding site; the sequence is GY. H131 is a substrate binding site. Pyridoxal 5'-phosphate-binding residues include S176, H204, and T233. At K236 the chain carries N6-(pyridoxal phosphate)lysine. T350 contributes to the substrate binding site.

Belongs to the class-II pyridoxal-phosphate-dependent aminotransferase family. BioF subfamily. As to quaternary structure, homodimer. Requires pyridoxal 5'-phosphate as cofactor.

The enzyme catalyses 6-carboxyhexanoyl-[ACP] + L-alanine + H(+) = (8S)-8-amino-7-oxononanoate + holo-[ACP] + CO2. It participates in cofactor biosynthesis; biotin biosynthesis. Functionally, catalyzes the decarboxylative condensation of pimeloyl-[acyl-carrier protein] and L-alanine to produce 8-amino-7-oxononanoate (AON), [acyl-carrier protein], and carbon dioxide. The chain is 8-amino-7-oxononanoate synthase from Ectopseudomonas mendocina (strain ymp) (Pseudomonas mendocina).